A 735-amino-acid chain; its full sequence is Serine/threonine-protein kinase BRSK2 (735 aa).

Residues 20 to 271 (YRLEKTLGKG…LEHIQKHIWY (252 aa)) enclose the Protein kinase domain. Residues 26 to 34 (LGKGQTGLV) and Lys-49 contribute to the ATP site. The active-site Proton acceptor is the Asp-142. Thr-175 carries the phosphothreonine; by LKB1 modification. Thr-261 is subject to Phosphothreonine; by PKA. Ser-295 carries the phosphoserine modification. Residues 298 to 340 (DIDPDVLDSMHSLGCFRDRNKLLQDLLSEEENQEKMIYFLLLD) enclose the UBA domain. Residues 346–367 (PSHEDEDLPPRNEIDPPRKRVD) show a composition bias toward basic and acidic residues. 2 disordered regions span residues 346 to 476 (PSHE…GVPW) and 492 to 516 (RFHRRKLQVPTPEEMSNLTPESSPE). Residues Ser-368, Ser-383, Ser-394, Ser-413, Ser-424, and Ser-428 each carry the phosphoserine modification. Residues 411-429 (SRSISGASSGLSTSPLSSP) show a composition bias toward low complexity. The segment covering 432–446 (TPHPSPRGSPLPTPK) has biased composition (pro residues). Ser-456 is subject to Phosphoserine. Phosphothreonine occurs at positions 460, 464, and 510. A phosphoserine mark is found at Ser-513, Ser-514, and Ser-521. A KEN box motif is present at residues 604 to 606 (KEN). A disordered region spans residues 682 to 735 (KNGQAAQAPSTPAKRSAHGPLGDSAAAGPGGDTEYPMGKDMAKMGPPAARREQP).

It belongs to the protein kinase superfamily. CAMK Ser/Thr protein kinase family. SNF1 subfamily. In terms of assembly, interacts with FZR1, a regulatory subunit of the APC ubiquitin ligase complex. Interacts with COPS5. Interacts with PAK1. Mg(2+) serves as cofactor. In terms of processing, may be phosphorylated at Thr-261 by PKA. Phosphorylated at Thr-175 by STK11/LKB1 in complex with STE20-related adapter-alpha (STRADA) pseudo kinase and CAB39. Not phosphorylated at Thr-175 by CaMKK2. In contrast, it is phosphorylated and activated by CaMKK1. May be inactivated via dephosphorylation of Thr-175 by PP2C. Polyubiquitinated by the APC complex in conjunction with FZR1, leading to its proteasomal degradation. Targeted for proteasomal degradation by interaction with COPS5. BRSK2 levels change during the cell cycle. BRSK2 levels are low at the G1/S boundary and gradually increase as cells progress into G2 phase. BRSK2 levels decrease rapidly at the end of mitosis. As to expression, detected in pancreas islets and in brain (at protein level). Detected in brain and pancreas.

The protein resides in the cytoplasm. It localises to the cytoskeleton. The protein localises to the microtubule organizing center. Its subcellular location is the centrosome. It is found in the perinuclear region. The protein resides in the endoplasmic reticulum. It carries out the reaction L-seryl-[protein] + ATP = O-phospho-L-seryl-[protein] + ADP + H(+). The enzyme catalyses L-threonyl-[protein] + ATP = O-phospho-L-threonyl-[protein] + ADP + H(+). The catalysed reaction is L-seryl-[tau protein] + ATP = O-phospho-L-seryl-[tau protein] + ADP + H(+). It catalyses the reaction L-threonyl-[tau protein] + ATP = O-phospho-L-threonyl-[tau protein] + ADP + H(+). Activated by phosphorylation on Thr-175 by STK11/LKB1. Serine/threonine-protein kinase that plays a key role in polarization of neurons and axonogenesis, cell cycle progress and insulin secretion. Phosphorylates CDK16, CDC25C, MAPT/TAU, PAK1 and WEE1. Following phosphorylation and activation by STK11/LKB1, acts as a key regulator of polarization of cortical neurons, probably by mediating phosphorylation of microtubule-associated proteins such as MAPT/TAU at 'Thr-504' and 'Ser-554'. Also regulates neuron polarization by mediating phosphorylation of WEE1 at 'Ser-642' in post-mitotic neurons, leading to down-regulate WEE1 activity in polarized neurons. Plays a role in the regulation of the mitotic cell cycle progress and the onset of mitosis. Plays a role in the regulation of insulin secretion in response to elevated glucose levels, probably via phosphorylation of CDK16 and PAK1. While BRSK2 phosphorylated at Thr-175 can inhibit insulin secretion, BRSK2 phosphorylated at Thr-261 can promote insulin secretion. Regulates reorganization of the actin cytoskeleton. May play a role in the apoptotic response triggered by endoplasmic reticulum (ER) stress. This Mus musculus (Mouse) protein is Serine/threonine-protein kinase BRSK2 (Brsk2).